A 206-amino-acid polypeptide reads, in one-letter code: uncharacterized protein (206 aa).

The tract at residues 147-206 (REEKAQKSKSKSRNQDERGSPLDERLGPKVSDLTLMERIFQVRRKPRKSRRDRRSRVSKR) is disordered. Basic and acidic residues predominate over residues 159–173 (RNQDERGSPLDERLG). The segment covering 187-206 (QVRRKPRKSRRDRRSRVSKR) has biased composition (basic residues).

This is an uncharacterized protein from Schizosaccharomyces pombe (strain 972 / ATCC 24843) (Fission yeast).